Reading from the N-terminus, the 509-residue chain is ATP synthase subunit beta, mitochondrial (509 aa).

A mitochondrion-targeting transit peptide spans Met1–Met32. Gly189–Val196 is an ATP binding site.

As to quaternary structure, F-type ATP synthases have 2 components, the catalytic core F(1) and the membrane-embedded component F(0), linked together by a central stalk and a peripheral stalk. The central stalk, also called rotor shaft, is often seen as part of F(1). The peripheral stalk is seen as part of F(0). F(0) contains the membrane channel next to the rotor. F-type ATP synthases form dimers but each monomer functions independently in ATP generation. The dimer consists of 17 different polypeptides: ATP1 (subunit alpha, 3 molecules per monomer, part of F(1)), ATP2 (subunit beta, 3 copies per monomer, part of F(1)), ATP3 (subunit gamma, part of the central stalk), ATP4 (subunit b, part of the peripheral stalk), ATP5/OSCP (subunit 5/OSCP, part of the peripheral stalk), ATP6 (subunit a, part of the peripheral stalk), ATP7 (subunit d, part of the peripheral stalk), ATP8 (subunit 8, part of the peripheral stalk), OLI1 (subunit c, part of the rotor, 10 molecules per monomer), ATP14 (subunit h, part of the peripheral stalk), ATP15 (subunit epsilon, part of the central stalk), ATP16 (subunit delta, part of the central stalk), ATP17 (subunit f, part of the peripheral stalk), ATP18 (subunit i/j, part of the peripheral stalk), ATP19 (subunit k, dimer-specific, at interface between monomers), ATP20 (subunit g, at interface between monomers), TIM11 (subunit e, at interface between monomers).

It is found in the mitochondrion inner membrane. The catalysed reaction is ATP + H2O + 4 H(+)(in) = ADP + phosphate + 5 H(+)(out). Mitochondrial membrane ATP synthase (F(1)F(0) ATP synthase or Complex V) produces ATP from ADP in the presence of a proton gradient across the membrane which is generated by electron transport complexes of the respiratory chain. F-type ATP synthases consist of two structural domains, F(1) - containing the extramembraneous catalytic core, and F(0) - containing the membrane proton channel, linked together by a central stalk and a peripheral stalk. During catalysis, ATP synthesis in the catalytic domain of F(1) is coupled via a rotary mechanism of the central stalk subunits to proton translocation. Subunits alpha/ATP1 and beta/ATP2 form the catalytic core in F(1). Rotation of the central stalk against the surrounding alpha/ATP1(3)beta/ATP2(3) subunits leads to hydrolysis of ATP in three separate catalytic sites on the beta/ATP2 subunits. The protein is ATP synthase subunit beta, mitochondrial of Yarrowia lipolytica (strain CLIB 122 / E 150) (Yeast).